The chain runs to 528 residues: PC4 and SFRS1-interacting protein (528 aa).

A PWWP domain is found at P7–N64. The segment at Y61–S348 is disordered. A Glycyl lysine isopeptide (Lys-Gly) (interchain with G-Cter in SUMO2) cross-link involves residue K75. Residues F92–S106 show a composition bias toward polar residues. Residues S102, S105, and S106 each carry the phosphoserine modification. The span at K113 to K135 shows a compositional bias: basic and acidic residues. T115 and T122 each carry phosphothreonine. S129 bears the Phosphoserine mark. T141 is subject to Phosphothreonine. Residues A144–A153 show a composition bias toward basic residues. The Nuclear localization signal signature appears at R146–Q156. Residues S176 and S205 each carry the phosphoserine modification. Over residues D212 to R260 the composition is skewed to basic and acidic residues. A Phosphoserine modification is found at S270. T271 carries the phosphothreonine modification. 2 positions are modified to phosphoserine: S272 and S274. Basic residues predominate over residues K285–M300. The segment covering G303–S348 has biased composition (basic and acidic residues). Coiled-coil stretches lie at residues E306–K332 and N369–E393. The interval V338–T415 is integrase-binding domain (IBD). At S432 the chain carries Phosphoserine. The residue at position 435 (T435) is a Phosphothreonine. S441 is subject to Phosphoserine. The span at E444 to T471 shows a compositional bias: basic and acidic residues. A disordered region spans residues E444 to N528. Positions G472–G492 are enriched in polar residues. Over residues E496–N528 the composition is skewed to basic and acidic residues. Position 515 is a citrulline (R515). S520 carries the post-translational modification Phosphoserine. T525 is modified (phosphothreonine).

Belongs to the HDGF family. Monomer. Interacts with IFRD1/PC4. Interacts (via IBD domain) with POGZ (via IBM motif) and CDCA7L (via IBM motifs). Interacts (via IBD domain) with KMT2A (via IBM motifs) with a moderate affinity whereas interacts with the KMT2A-MEN1 complex with a greater affinity; MEN1 enhances interaction of KMT2A with PSIP1. Interacts (via IBD domain) with IWS1 (via IBM motif), MED1 (via IBM motif) and DBF4 (via IBM motifs). In terms of processing, citrullinated by PADI4.

The protein resides in the nucleus. Its function is as follows. Transcriptional coactivator involved in neuroepithelial stem cell differentiation and neurogenesis. Involved in particular in lens epithelial cell gene regulation and stress responses. May play an important role in lens epithelial to fiber cell terminal differentiation. May play a protective role during stress-induced apoptosis. The polypeptide is PC4 and SFRS1-interacting protein (Psip1) (Mus musculus (Mouse)).